We begin with the raw amino-acid sequence, 159 residues long: Putative viral CXC chemokine 2 (159 aa).

2 disulfide bridges follow: Cys50/Cys77 and Cys52/Cys93.

Belongs to the intercrine alpha (chemokine CxC) family.

The protein is Putative viral CXC chemokine 2 (UL147) of Human cytomegalovirus (strain Merlin) (HHV-5).